A 371-amino-acid polypeptide reads, in one-letter code: MLSRFKCSRLQLQKRAISVTKATTTTASQPKRRRTTTFSDALNKGPSFEDFVSGKAAKFTLDPLQQARSNIEEAKRLPRWLKVPIPKGTNYHKLKKDVRELKLSTVCEEAKCPNISECWGGGDSSKATATIMLLGDTCTRGCRFCSVKTNRAPSKPDPAEPENTAEAISRWGLGYVVLTTVDRDDLADGGAHHLAETVCRIKQKAPKTLVETLSGDFRGDLEMVKVMAQSGLDVYAHNLETVKDLTPHVRDRRATYEQSLSVLNQAKKTVPTLITKTSLMLGLGETDEQVLQTLQDLRAIGCDVVTFGQYMRPTKRHMKVVEYVKPEKFDYWRDKALELGFLYCASGPLVRSSYKAGEAFIENVLRKRANN.

The transit peptide at 1–24 (MLSRFKCSRLQLQKRAISVTKATT) directs the protein to the mitochondrion. The segment covering 20–29 (TKATTTTASQ) has biased composition (polar residues). Residues 20 to 42 (TKATTTTASQPKRRRTTTFSDAL) form a disordered region. Positions 107, 112, 118, 138, 142, 145, and 353 each coordinate [4Fe-4S] cluster. In terms of domain architecture, Radical SAM core spans 121 to 342 (GGDSSKATAT…RDKALELGFL (222 aa)).

Belongs to the radical SAM superfamily. Lipoyl synthase family. The cofactor is [4Fe-4S] cluster.

Its subcellular location is the mitochondrion. It catalyses the reaction [[Fe-S] cluster scaffold protein carrying a second [4Fe-4S](2+) cluster] + N(6)-octanoyl-L-lysyl-[protein] + 2 oxidized [2Fe-2S]-[ferredoxin] + 2 S-adenosyl-L-methionine + 4 H(+) = [[Fe-S] cluster scaffold protein] + N(6)-[(R)-dihydrolipoyl]-L-lysyl-[protein] + 4 Fe(3+) + 2 hydrogen sulfide + 2 5'-deoxyadenosine + 2 L-methionine + 2 reduced [2Fe-2S]-[ferredoxin]. It functions in the pathway protein modification; protein lipoylation via endogenous pathway; protein N(6)-(lipoyl)lysine from octanoyl-[acyl-carrier-protein]: step 2/2. Catalyzes the radical-mediated insertion of two sulfur atoms into the C-6 and C-8 positions of the octanoyl moiety bound to the lipoyl domains of lipoate-dependent enzymes, thereby converting the octanoylated domains into lipoylated derivatives. This chain is Lipoyl synthase, mitochondrial, found in Lachancea thermotolerans (strain ATCC 56472 / CBS 6340 / NRRL Y-8284) (Yeast).